A 41-amino-acid polypeptide reads, in one-letter code: Large ribosomal subunit protein bL36 (41 aa).

It belongs to the bacterial ribosomal protein bL36 family.

The protein is Large ribosomal subunit protein bL36 of Rickettsia africae (strain ESF-5).